The primary structure comprises 443 residues: Glutamate--tRNA ligase 2 (443 aa).

A 'HIGH' region motif is present at residues 7–17 (PSPTGLIHVGN). A 'KMSKS' region motif is present at residues 240 to 244 (KLSKR). ATP is bound at residue Lys-243.

Belongs to the class-I aminoacyl-tRNA synthetase family. Glutamate--tRNA ligase type 1 subfamily. Monomer.

The protein localises to the cytoplasm. The catalysed reaction is tRNA(Glu) + L-glutamate + ATP = L-glutamyl-tRNA(Glu) + AMP + diphosphate. Functionally, catalyzes the attachment of glutamate to tRNA(Glu) in a two-step reaction: glutamate is first activated by ATP to form Glu-AMP and then transferred to the acceptor end of tRNA(Glu). The polypeptide is Glutamate--tRNA ligase 2 (Gluconacetobacter diazotrophicus (strain ATCC 49037 / DSM 5601 / CCUG 37298 / CIP 103539 / LMG 7603 / PAl5)).